Reading from the N-terminus, the 245-residue chain is 1-(5-phosphoribosyl)-5-[(5-phosphoribosylamino)methylideneamino] imidazole-4-carboxamide isomerase (245 aa).

Catalysis depends on aspartate 8, which acts as the Proton acceptor. Aspartate 131 serves as the catalytic Proton donor.

It belongs to the HisA/HisF family.

The protein localises to the cytoplasm. The enzyme catalyses 1-(5-phospho-beta-D-ribosyl)-5-[(5-phospho-beta-D-ribosylamino)methylideneamino]imidazole-4-carboxamide = 5-[(5-phospho-1-deoxy-D-ribulos-1-ylimino)methylamino]-1-(5-phospho-beta-D-ribosyl)imidazole-4-carboxamide. The protein operates within amino-acid biosynthesis; L-histidine biosynthesis; L-histidine from 5-phospho-alpha-D-ribose 1-diphosphate: step 4/9. The polypeptide is 1-(5-phosphoribosyl)-5-[(5-phosphoribosylamino)methylideneamino] imidazole-4-carboxamide isomerase (Neisseria meningitidis serogroup C / serotype 2a (strain ATCC 700532 / DSM 15464 / FAM18)).